Consider the following 431-residue polypeptide: Serine hydroxymethyltransferase 2 (431 aa).

(6S)-5,6,7,8-tetrahydrofolate is bound by residues leucine 131 and 135 to 137; that span reads GHL. The residue at position 240 (lysine 240) is an N6-(pyridoxal phosphate)lysine.

This sequence belongs to the SHMT family. As to quaternary structure, homodimer. Requires pyridoxal 5'-phosphate as cofactor.

The protein localises to the cytoplasm. It carries out the reaction (6R)-5,10-methylene-5,6,7,8-tetrahydrofolate + glycine + H2O = (6S)-5,6,7,8-tetrahydrofolate + L-serine. It functions in the pathway one-carbon metabolism; tetrahydrofolate interconversion. It participates in amino-acid biosynthesis; glycine biosynthesis; glycine from L-serine: step 1/1. Functionally, catalyzes the reversible interconversion of serine and glycine with tetrahydrofolate (THF) serving as the one-carbon carrier. This reaction serves as the major source of one-carbon groups required for the biosynthesis of purines, thymidylate, methionine, and other important biomolecules. Also exhibits THF-independent aldolase activity toward beta-hydroxyamino acids, producing glycine and aldehydes, via a retro-aldol mechanism. The polypeptide is Serine hydroxymethyltransferase 2 (Photobacterium profundum (strain SS9)).